The primary structure comprises 272 residues: tRNA pseudouridine synthase B (272 aa).

Residue D38 is the Nucleophile of the active site.

It belongs to the pseudouridine synthase TruB family. Type 1 subfamily.

The catalysed reaction is uridine(55) in tRNA = pseudouridine(55) in tRNA. Its function is as follows. Responsible for synthesis of pseudouridine from uracil-55 in the psi GC loop of transfer RNAs. This is tRNA pseudouridine synthase B from Campylobacter jejuni (strain RM1221).